The sequence spans 249 residues: UPF0309 protein GTNG_1302 (249 aa).

Positions 31-214 (VSKAVQNGGI…ALMAENGVEP (184 aa)) constitute an SIS domain.

Belongs to the UPF0309 family.

This is UPF0309 protein GTNG_1302 from Geobacillus thermodenitrificans (strain NG80-2).